A 705-amino-acid polypeptide reads, in one-letter code: Translation initiation factor IF-2 (705 aa).

The segment at 40 to 124 is disordered; that stretch reads DDQIKALDKK…QPAAPKEIPS (85 aa). Residues 41-58 are compositionally biased toward basic and acidic residues; sequence DQIKALDKKFKKEQKNDN. The segment covering 59 to 77 has biased composition (low complexity); that stretch reads KQSTQNNHQKSNNQNQNKG. Residues 94–108 show a composition bias toward basic residues; it reads KGNKKNNRNNKKNNK. The tr-type G domain occupies 207 to 376; it reads ERPAVVTIMG…GLVAEVQELK (170 aa). Residues 216-223 are G1; that stretch reads GHVDHGKT. 216–223 is a binding site for GTP; that stretch reads GHVDHGKT. The tract at residues 241–245 is G2; that stretch reads GITQH. A G3 region spans residues 262–265; that stretch reads DTPG. GTP is bound by residues 262 to 266 and 316 to 319; these read DTPGH and NKID. The tract at residues 316 to 319 is G4; it reads NKID. A G5 region spans residues 352–354; it reads SAL.

This sequence belongs to the TRAFAC class translation factor GTPase superfamily. Classic translation factor GTPase family. IF-2 subfamily.

The protein resides in the cytoplasm. One of the essential components for the initiation of protein synthesis. Protects formylmethionyl-tRNA from spontaneous hydrolysis and promotes its binding to the 30S ribosomal subunits. Also involved in the hydrolysis of GTP during the formation of the 70S ribosomal complex. The polypeptide is Translation initiation factor IF-2 (Staphylococcus aureus (strain Mu3 / ATCC 700698)).